We begin with the raw amino-acid sequence, 224 residues long: MATTMKGLLKGLRYITQIFDEEKEQEMQIGFPTDVKHVAHIGSDGPTNTTPSWMNDFKTQEHEKGQVVSRGNSNKYNPQGTNQRGAGLKELLPSNTNEKPKQKTRRKPGGAASPNHNGSPPRKSSGNAASSDEPSKHSRHNRSAHGSTDSSNDQEPSVRRRRGGIPAPDTEVPNQIPDGSAPPRKATSRPRKLKGSSAGGEGSIKKSSKGKPENSVDTTCNDII.

One can recognise a CRIB domain in the interval 29-42 (IGFPTDVKHVAHIG). Residues 38–224 (VAHIGSDGPT…SVDTTCNDII (187 aa)) are disordered. Polar residues-rich tracts occupy residues 69–84 (SRGN…TNQR), 114–132 (PNHN…ASSD), 144–155 (AHGSTDSSNDQE), and 215–224 (SVDTTCNDII).

Interacts with ARAC11/ROP1. Expressed in columella cells from the root tip and epidermal cells at the base of lateral roots, leaves, stems, flowers, anthers, pollen and siliques.

Its subcellular location is the cytoplasm. It is found in the cytoskeleton. In terms of biological role, functions as a downstream effector of Rho-related GTP binding proteins of the 'Rho of Plants' (ROPs) family. Participates in the propagation of ROP GTPase signals in specific cellular responses. Required for cortical microtubule organization. Promotes microtubule bundling and formation of well-ordered microtubule arrays in the neck region of pavement cells. This restricts cell lateral expansion to generate the narrow neck morphology of pavement cells. Its function is inhibited when it interacts with activated ARAC4/ROP2. Represses ARAC4/ROP2 activation and antagonizes the RIC4-actin pathway that promotes the assembly of cortical actin microfilaments. Acts as a downstream effector of ARAC3/ROP6 which functions in a signaling pathway that negatively regulates clathrin-mediated endocytosis and internalization of PIN1 and PIN2. Required for the asymmetric auxin distribution during root gravitropism and vascular patterning. Positively regulates auxin responses, but negatively regulates ABA responses during lateral root development and primary root elongation. The chain is CRIB domain-containing protein RIC1 (RIC1) from Arabidopsis thaliana (Mouse-ear cress).